The sequence spans 453 residues: GTPase Der (453 aa).

2 EngA-type G domains span residues Pro3–Lys167 and Val188–Gln361. Residues Gly9–Ser16, Asp57–Ile61, Asn119–Asp122, Gly194–Ser201, Asp241–Met245, and Asn306–Asp309 each bind GTP. The KH-like domain maps to Lys362–Met446.

The protein belongs to the TRAFAC class TrmE-Era-EngA-EngB-Septin-like GTPase superfamily. EngA (Der) GTPase family. In terms of assembly, associates with the 50S ribosomal subunit.

GTPase that plays an essential role in the late steps of ribosome biogenesis. This chain is GTPase Der, found in Buchnera aphidicola subsp. Schizaphis graminum (strain Sg).